Here is a 257-residue protein sequence, read N- to C-terminus: UPF0246 protein ECA3888 (257 aa).

It belongs to the UPF0246 family.

This is UPF0246 protein ECA3888 from Pectobacterium atrosepticum (strain SCRI 1043 / ATCC BAA-672) (Erwinia carotovora subsp. atroseptica).